Consider the following 581-residue polypeptide: MKSHIESLLEQTIESFKNQGIVPADFQARIQVDRTKDKTHGDLATNLAMMLTKVAGKNPRELAQLIIDNLPPSSHVAKVEIAGPGFINFFIDDNALATQLEQALNDEHFGITLPEPQTIVVDYSSPNLAKEMHVGHLRSTIIGDSVVRALEFLGHKVIRQNHVGDWGTQFGMLLAYMEELRAANGEQAQLELSDLETFYRAAKLRFDESTDFATRARQLVVALQSGDEYCNKLWQEFNDISLSHCHDVYERLGVSLTRADVHGESAYNADLEQVVKDLDAKGLLSESNGAKVVFQEAFRTKEGEPLPVIIQKADGGYLYATSDLAAMRYRSKVLKADRALYFVDLRQALHFQQVFSLAKLAKFVRKDMQLEHNGFGTMNGEDGRPFKTRSGGVVKLVDLLDEANNRALELVRSKNPDMDEATLTEIARVVGISSVKYADLSKNRTSDYIFSFEQMLSFEGNTAPYLLYAYTRVAGIFKRAEDIDLTDAKIVLEHDKEKELATKLAQFGETLYKMTDKAQPNMLCNYLYELAGAFSSFYEACPVLAADTPAQQGSRLLLAKLTANTLNKGLSLLGIETLERM.

The short motif at 126 to 136 is the 'HIGH' region element; that stretch reads PNLAKEMHVGH.

This sequence belongs to the class-I aminoacyl-tRNA synthetase family. Monomer.

It localises to the cytoplasm. It carries out the reaction tRNA(Arg) + L-arginine + ATP = L-arginyl-tRNA(Arg) + AMP + diphosphate. The sequence is that of Arginine--tRNA ligase from Shewanella denitrificans (strain OS217 / ATCC BAA-1090 / DSM 15013).